The chain runs to 357 residues: 4-hydroxyphenylpyruvate dioxygenase (357 aa).

VOC domains follow at residues 12–129 (GFEF…LIDR) and 158–313 (IIDH…IFSE). His-161, His-240, and Glu-322 together coordinate Fe cation.

This sequence belongs to the 4HPPD family. As to quaternary structure, homotetramer. Requires Fe cation as cofactor.

It carries out the reaction 3-(4-hydroxyphenyl)pyruvate + O2 = homogentisate + CO2. It participates in amino-acid degradation; L-phenylalanine degradation; acetoacetate and fumarate from L-phenylalanine: step 3/6. This is 4-hydroxyphenylpyruvate dioxygenase (hpd) from Pseudomonas sp. (strain P.J. 874).